The primary structure comprises 89 residues: Small ribosomal subunit protein uS14 (89 aa).

The protein belongs to the universal ribosomal protein uS14 family. As to quaternary structure, part of the 30S ribosomal subunit. Contacts proteins S3 and S10.

Its function is as follows. Binds 16S rRNA, required for the assembly of 30S particles and may also be responsible for determining the conformation of the 16S rRNA at the A site. In Latilactobacillus sakei subsp. sakei (strain 23K) (Lactobacillus sakei subsp. sakei), this protein is Small ribosomal subunit protein uS14.